A 78-amino-acid chain; its full sequence is Probable [Fe-S]-dependent transcriptional repressor (78 aa).

Residues C56, C61, C64, and C70 each coordinate iron-sulfur cluster.

The protein belongs to the FeoC family.

In terms of biological role, may function as a transcriptional regulator that controls feoABC expression. The polypeptide is Probable [Fe-S]-dependent transcriptional repressor (Cronobacter sakazakii (strain ATCC BAA-894) (Enterobacter sakazakii)).